A 119-amino-acid polypeptide reads, in one-letter code: Holo-[acyl-carrier-protein] synthase (119 aa).

Mg(2+) is bound by residues aspartate 8 and glutamate 58.

This sequence belongs to the P-Pant transferase superfamily. AcpS family. The cofactor is Mg(2+).

The protein localises to the cytoplasm. It carries out the reaction apo-[ACP] + CoA = holo-[ACP] + adenosine 3',5'-bisphosphate + H(+). Functionally, transfers the 4'-phosphopantetheine moiety from coenzyme A to a Ser of acyl-carrier-protein. The polypeptide is Holo-[acyl-carrier-protein] synthase (Halalkalibacterium halodurans (strain ATCC BAA-125 / DSM 18197 / FERM 7344 / JCM 9153 / C-125) (Bacillus halodurans)).